We begin with the raw amino-acid sequence, 431 residues long: Histidinol dehydrogenase (431 aa).

NAD(+)-binding residues include Tyr-130, Gln-192, and Asn-215. 3 residues coordinate substrate: Ser-238, Gln-260, and His-263. Zn(2+)-binding residues include Gln-260 and His-263. Residues Glu-328 and His-329 each act as proton acceptor in the active site. The substrate site is built by His-329, Asp-362, Glu-416, and His-421. Zn(2+) is bound at residue Asp-362. His-421 serves as a coordination point for Zn(2+).

The protein belongs to the histidinol dehydrogenase family. Zn(2+) serves as cofactor.

It carries out the reaction L-histidinol + 2 NAD(+) + H2O = L-histidine + 2 NADH + 3 H(+). It functions in the pathway amino-acid biosynthesis; L-histidine biosynthesis; L-histidine from 5-phospho-alpha-D-ribose 1-diphosphate: step 9/9. Catalyzes the sequential NAD-dependent oxidations of L-histidinol to L-histidinaldehyde and then to L-histidine. The sequence is that of Histidinol dehydrogenase from Thermosynechococcus vestitus (strain NIES-2133 / IAM M-273 / BP-1).